Consider the following 673-residue polypeptide: MKKLTICSEYTPSGDQPTAIKQLLEGIESGLAHQTLLGVTGSGKTYTIANVIEKLNRPTMMLAPNKTLAAQLYGEMKEFFPDNAVEYFVSYYDYYQPEAYVPTTDTFIEKDASVNEHIEQMRLSATKALLERRDVIIIASVSAIYGLGDPDSYLKMMLHISRGDIINQRDILRRLAELQYTRNDVAFARATYRVRGDVIDIFPAESDRLALRVELFDEEIERISQFDPLTGQVERTLDRVTVYPKTHYATPKEKIIAAVDKIKIELKHRSQQLKDNNKLVEEQRLTQRTQFDIEMMTELGYCSGIENYSRYLSGREEGGAPPTLFDYLPDDGLLIIDESHVTVPQIGAMYKGDRSRKENLVEYGFRLPSALDNRPMKFEEFEAISPQTIYVSATPSKFELEKCGSDIAEQVVRPTGLLDPEIEVRPVETQVDDLLSEINKRLPLDERVLATTLTKRMAEDLTDYLYDHGIKARYLHSDVDTVERVEIIRDFRLGKFDVLVGINLLREGLDMPEVSLVAILDADKEGFLRSDRSLIQTIGRAARNLNGRAILYGDRITGSMRRAIDETERRRVKQHQYNLDNNITPQGVVRRITDVMGVGSYSDAKSLDKVAEANTNYHINQQAEEPLLTTSQIDTKIVELEKLMQGHAQNLEFEQAAAMRDKIAKLRIQQLST.

Residues 25-413 form the Helicase ATP-binding domain; the sequence is EGIESGLAHQ…GSDIAEQVVR (389 aa). 38–45 contacts ATP; sequence GVTGSGKT. Residues 91 to 114 carry the Beta-hairpin motif; sequence YYDYYQPEAYVPTTDTFIEKDASV. Residues 430–583 form the Helicase C-terminal domain; the sequence is QVDDLLSEIN…QHQYNLDNNI (154 aa). Positions 634–669 constitute a UVR domain; sequence DTKIVELEKLMQGHAQNLEFEQAAAMRDKIAKLRIQ.

The protein belongs to the UvrB family. As to quaternary structure, forms a heterotetramer with UvrA during the search for lesions. Interacts with UvrC in an incision complex.

The protein resides in the cytoplasm. Functionally, the UvrABC repair system catalyzes the recognition and processing of DNA lesions. A damage recognition complex composed of 2 UvrA and 2 UvrB subunits scans DNA for abnormalities. Upon binding of the UvrA(2)B(2) complex to a putative damaged site, the DNA wraps around one UvrB monomer. DNA wrap is dependent on ATP binding by UvrB and probably causes local melting of the DNA helix, facilitating insertion of UvrB beta-hairpin between the DNA strands. Then UvrB probes one DNA strand for the presence of a lesion. If a lesion is found the UvrA subunits dissociate and the UvrB-DNA preincision complex is formed. This complex is subsequently bound by UvrC and the second UvrB is released. If no lesion is found, the DNA wraps around the other UvrB subunit that will check the other stand for damage. The chain is UvrABC system protein B from Colwellia psychrerythraea (strain 34H / ATCC BAA-681) (Vibrio psychroerythus).